Reading from the N-terminus, the 317-residue chain is 4-hydroxy-3-methylbut-2-enyl diphosphate reductase (317 aa).

Cys12 contributes to the [4Fe-4S] cluster binding site. The (2E)-4-hydroxy-3-methylbut-2-enyl diphosphate site is built by His41 and His74. Dimethylallyl diphosphate contacts are provided by His41 and His74. Residues His41 and His74 each contribute to the isopentenyl diphosphate site. Cys97 serves as a coordination point for [4Fe-4S] cluster. Position 125 (His125) interacts with (2E)-4-hydroxy-3-methylbut-2-enyl diphosphate. His125 contacts dimethylallyl diphosphate. His125 lines the isopentenyl diphosphate pocket. Glu127 acts as the Proton donor in catalysis. Residue Thr168 participates in (2E)-4-hydroxy-3-methylbut-2-enyl diphosphate binding. A [4Fe-4S] cluster-binding site is contributed by Cys198. The (2E)-4-hydroxy-3-methylbut-2-enyl diphosphate site is built by Ser226, Ser227, Asn228, and Ser270. Residues Ser226, Ser227, Asn228, and Ser270 each contribute to the dimethylallyl diphosphate site. Residues Ser226, Ser227, Asn228, and Ser270 each coordinate isopentenyl diphosphate.

Belongs to the IspH family. As to quaternary structure, homodimer. Requires [4Fe-4S] cluster as cofactor.

The catalysed reaction is isopentenyl diphosphate + 2 oxidized [2Fe-2S]-[ferredoxin] + H2O = (2E)-4-hydroxy-3-methylbut-2-enyl diphosphate + 2 reduced [2Fe-2S]-[ferredoxin] + 2 H(+). It carries out the reaction dimethylallyl diphosphate + 2 oxidized [2Fe-2S]-[ferredoxin] + H2O = (2E)-4-hydroxy-3-methylbut-2-enyl diphosphate + 2 reduced [2Fe-2S]-[ferredoxin] + 2 H(+). It participates in isoprenoid biosynthesis; dimethylallyl diphosphate biosynthesis; dimethylallyl diphosphate from (2E)-4-hydroxy-3-methylbutenyl diphosphate: step 1/1. It functions in the pathway isoprenoid biosynthesis; isopentenyl diphosphate biosynthesis via DXP pathway; isopentenyl diphosphate from 1-deoxy-D-xylulose 5-phosphate: step 6/6. Its function is as follows. Catalyzes the conversion of 1-hydroxy-2-methyl-2-(E)-butenyl 4-diphosphate (HMBPP) into a mixture of isopentenyl diphosphate (IPP) and dimethylallyl diphosphate (DMAPP). Acts in the terminal step of the DOXP/MEP pathway for isoprenoid precursor biosynthesis. In Yersinia pseudotuberculosis serotype IB (strain PB1/+), this protein is 4-hydroxy-3-methylbut-2-enyl diphosphate reductase.